Consider the following 237-residue polypeptide: V-type proton ATPase subunit E3 (237 aa).

N-acetylmethionine is present on Met-1. The stretch at 9 to 67 (QIQQMVRFIRQEAEEKANEISISSEEEFNIEKLQLVEAEKKKIRQEYEKKEKQVDVRKK) forms a coiled coil.

Belongs to the V-ATPase E subunit family. As to quaternary structure, V-ATPase is a heteromultimeric enzyme composed of a peripheral catalytic V1 complex (components A to H) attached to an integral membrane V0 proton pore complex (components: a, c, c'', d and e).

It is found in the vacuole membrane. Subunit of the peripheral V1 complex of vacuolar ATPase essential for assembly or catalytic function. V-ATPase is responsible for acidifying a variety of intracellular compartments in eukaryotic cells. This is V-type proton ATPase subunit E3 (VHA-E3) from Arabidopsis thaliana (Mouse-ear cress).